Reading from the N-terminus, the 952-residue chain is Isoleucine--tRNA ligase (952 aa).

The 'HIGH' region motif lies at 58–68 (PYANGDIHIGH). L-isoleucyl-5'-AMP is bound at residue Glu576. Positions 617–621 (KMSKS) match the 'KMSKS' region motif. Position 620 (Lys620) interacts with ATP. Positions 915, 918, 935, and 938 each coordinate Zn(2+).

This sequence belongs to the class-I aminoacyl-tRNA synthetase family. IleS type 1 subfamily. In terms of assembly, monomer. Requires Zn(2+) as cofactor.

The protein resides in the cytoplasm. The catalysed reaction is tRNA(Ile) + L-isoleucine + ATP = L-isoleucyl-tRNA(Ile) + AMP + diphosphate. Functionally, catalyzes the attachment of isoleucine to tRNA(Ile). As IleRS can inadvertently accommodate and process structurally similar amino acids such as valine, to avoid such errors it has two additional distinct tRNA(Ile)-dependent editing activities. One activity is designated as 'pretransfer' editing and involves the hydrolysis of activated Val-AMP. The other activity is designated 'posttransfer' editing and involves deacylation of mischarged Val-tRNA(Ile). This Vibrio atlanticus (strain LGP32) (Vibrio splendidus (strain Mel32)) protein is Isoleucine--tRNA ligase.